Reading from the N-terminus, the 201-residue chain is Recombination protein RecR (201 aa).

A C4-type zinc finger spans residues 57–74 (CSICGNITATDTDPCVIC). The 97-residue stretch at 82-178 (STVFVVENSR…AVTRLAHGLA (97 aa)) folds into the Toprim domain.

This sequence belongs to the RecR family.

Functionally, may play a role in DNA repair. It seems to be involved in an RecBC-independent recombinational process of DNA repair. It may act with RecF and RecO. This Leuconostoc mesenteroides subsp. mesenteroides (strain ATCC 8293 / DSM 20343 / BCRC 11652 / CCM 1803 / JCM 6124 / NCDO 523 / NBRC 100496 / NCIMB 8023 / NCTC 12954 / NRRL B-1118 / 37Y) protein is Recombination protein RecR.